Here is a 511-residue protein sequence, read N- to C-terminus: Alpha-amylase 1 (511 aa).

An N-terminal signal peptide occupies residues 1 to 15; sequence MKFFLLLSLIGFCWA. Q16 is modified (pyrrolidone carboxylic acid). Disulfide bonds link C43–C101, C85–C130, and C156–C175. Residues N115, R173, and D182 each coordinate Ca(2+). R210 contacts chloride. D212 acts as the Nucleophile in catalysis. Residue H216 coordinates Ca(2+). Residue E248 is the Proton donor of the active site. 2 residues coordinate chloride: N313 and R352. 2 disulfides stabilise this stretch: C393–C399 and C465–C477.

It belongs to the glycosyl hydrolase 13 family. Monomer. The cofactor is Ca(2+). It depends on chloride as a cofactor. Expressed in liver and saliva.

The protein resides in the secreted. The catalysed reaction is Endohydrolysis of (1-&gt;4)-alpha-D-glucosidic linkages in polysaccharides containing three or more (1-&gt;4)-alpha-linked D-glucose units.. This is Alpha-amylase 1 (Amy1) from Mus musculus (Mouse).